The sequence spans 487 residues: Wax ester synthase/diacylglycerol acyltransferase 3 (487 aa).

The Cytoplasmic segment spans residues 1 to 193 (MYTMKKGKDM…KHASSNKKSW (193 aa)). The Proton acceptor role is filled by His-151. A helical transmembrane segment spans residues 194 to 214 (WLVGRFWFMIRIIFTTVVELF). The Lumenal portion of the chain corresponds to 215-487 (KYLLTLCFMR…MEKGVHKMEV (273 aa)).

In the N-terminal section; belongs to the long-chain O-acyltransferase family. In terms of tissue distribution, mostly expressed in flowers and siliques.

It is found in the cell membrane. It localises to the endoplasmic reticulum membrane. It catalyses the reaction an acyl-CoA + a 1,2-diacyl-sn-glycerol = a triacyl-sn-glycerol + CoA. The enzyme catalyses a long chain fatty alcohol + a fatty acyl-CoA = a wax ester + CoA. The protein operates within glycerolipid metabolism; triacylglycerol biosynthesis. It participates in lipid metabolism. In terms of biological role, bifunctional wax ester synthase/diacylglycerol acyltransferase. Involved in cuticular wax biosynthesis. The protein is Wax ester synthase/diacylglycerol acyltransferase 3 of Arabidopsis thaliana (Mouse-ear cress).